A 213-amino-acid polypeptide reads, in one-letter code: Thiopurine S-methyltransferase (213 aa).

S-adenosyl-L-methionine is bound by residues tryptophan 10, methionine 45, glutamate 66, and arginine 120.

The protein belongs to the class I-like SAM-binding methyltransferase superfamily. TPMT family.

The protein localises to the cytoplasm. The enzyme catalyses S-adenosyl-L-methionine + a thiopurine = S-adenosyl-L-homocysteine + a thiopurine S-methylether.. The chain is Thiopurine S-methyltransferase from Photobacterium profundum (strain SS9).